A 456-amino-acid polypeptide reads, in one-letter code: Exodeoxyribonuclease 7 large subunit (456 aa).

This sequence belongs to the XseA family. Heterooligomer composed of large and small subunits.

Its subcellular location is the cytoplasm. The catalysed reaction is Exonucleolytic cleavage in either 5'- to 3'- or 3'- to 5'-direction to yield nucleoside 5'-phosphates.. In terms of biological role, bidirectionally degrades single-stranded DNA into large acid-insoluble oligonucleotides, which are then degraded further into small acid-soluble oligonucleotides. The protein is Exodeoxyribonuclease 7 large subunit of Shigella dysenteriae serotype 1 (strain Sd197).